The sequence spans 905 residues: Protein translocase subunit SecA (905 aa).

Residues Q86, 104–108, and D499 each bind ATP; that span reads GEGKT. Zn(2+)-binding residues include C890, C892, C901, and H902.

This sequence belongs to the SecA family. As to quaternary structure, monomer and homodimer. Part of the essential Sec protein translocation apparatus which comprises SecA, SecYEG and auxiliary proteins SecDF-YajC and YidC. It depends on Zn(2+) as a cofactor.

It is found in the cell inner membrane. Its subcellular location is the cytoplasm. It carries out the reaction ATP + H2O + cellular proteinSide 1 = ADP + phosphate + cellular proteinSide 2.. In terms of biological role, part of the Sec protein translocase complex. Interacts with the SecYEG preprotein conducting channel. Has a central role in coupling the hydrolysis of ATP to the transfer of proteins into and across the cell membrane, serving both as a receptor for the preprotein-SecB complex and as an ATP-driven molecular motor driving the stepwise translocation of polypeptide chains across the membrane. The sequence is that of Protein translocase subunit SecA from Rickettsia typhi (strain ATCC VR-144 / Wilmington).